The primary structure comprises 445 residues: E3 ubiquitin-protein ligase pellino homolog 3 (445 aa).

The interval 1-24 (MVLEGNPDVGSPRTSDLQHPGSQG) is disordered. S11 carries the phosphoserine modification. A compositionally biased stretch (polar residues) spans 12-24 (PRTSDLQHPGSQG).

It belongs to the pellino family. Interacts with TRAF6, MAP3K14 and MAP3K7. In terms of processing, phosphorylated by IRAK1 enhancing its E3 ligase activity.

The enzyme catalyses S-ubiquitinyl-[E2 ubiquitin-conjugating enzyme]-L-cysteine + [acceptor protein]-L-lysine = [E2 ubiquitin-conjugating enzyme]-L-cysteine + N(6)-ubiquitinyl-[acceptor protein]-L-lysine.. Its pathway is protein modification; protein ubiquitination. Its function is as follows. E3 ubiquitin ligase catalyzing the covalent attachment of ubiquitin moieties onto substrate proteins. Involved in the TLR and IL-1 signaling pathways via interaction with the complex containing IRAK kinases and TRAF6. Mediates 'Lys-63'-linked polyubiquitination of IRAK1. Can activate AP1/JUN and ELK1. Acts as a regulator of innate immunity by mediating 'Lys-63'-linked polyubiquitination of RIPK2 downstream of NOD1 and NOD2, thereby transforming RIPK2 into a scaffolding protein for downstream effectors, ultimately leading to activation of the NF-kappa-B and MAP kinases signaling. Catalyzes 'Lys-63'-linked polyubiquitination of RIPK2 in parallel of XIAP. This Mus musculus (Mouse) protein is E3 ubiquitin-protein ligase pellino homolog 3.